Consider the following 541-residue polypeptide: MKSTDSAKCLGSKSLAICCLLLHLLLCIRPAVSQTQSPQRYLHNVDSNSNNNERLHQILKGSGAGSGATQLNWPQPPKQTVPNVKTELAKLNNTYVYQNAWPANNVKLGAVTAVSFDKAGNVVIFHRVNRVWGQTTFDNRNQYQEKYRGPIRESTILALEPATGKVQYDWGKNFFYMPHGLTVDPEDNVWLTDVAMHQVFKFPPRGGDGKPALTLGDAFQPGSGRKFCKPTSVAVLDNGDFFVADGYCNARILKYSRKGELILFWGQNTFSGISYDVAPQNFFAIPHALTLVPELQLLCAADRENGRVQCFLSSNGTFHSQYHNQLIGDRLFSMAYTPAAGGQLVIVNGPTAELGIHPEHYNEVHGFVLSMRSKQLVSKFGPNNLQFQNPHDVAVTADGNEIYVAELNPMRIHKFVHRSLAKPMSLSASKDSRDSAISQAVGGDQVPAVAVHHPSGKAILVASLMLLFAGSTFALALIFARRRKRGCLPFGARGRRHAWEKSDGFKLGGLLDRDRNGFEKLDQQASDEEQETKTLASAQYA.

The first 33 residues, 1–33 (MKSTDSAKCLGSKSLAICCLLLHLLLCIRPAVS), serve as a signal peptide directing secretion. Residues 34–458 (QTQSPQRYLH…VAVHHPSGKA (425 aa)) are Extracellular-facing. Residue Asn92 is glycosylated (N-linked (GlcNAc...) asparagine). 3 NHL repeats span residues 164-205 (GKVQ…FPPR), 215-258 (LGDA…YSRK), and 272-314 (GISY…FLSS). 2 disulfides stabilise this stretch: Cys228-Cys248 and Cys299-Cys310. Residue Asn315 is glycosylated (N-linked (GlcNAc...) asparagine). Residues 374–418 (KQLVSKFGPNNLQFQNPHDVAVTADGNEIYVAELNPMRIHKFVHR) form an NHL 4 repeat. A helical transmembrane segment spans residues 459–479 (ILVASLMLLFAGSTFALALIF). Topologically, residues 480-541 (ARRRKRGCLP…TKTLASAQYA (62 aa)) are cytoplasmic. The tract at residues 521-541 (LDQQASDEEQETKTLASAQYA) is disordered.

Belongs to the peptidyl-alpha-hydroxyglycine alpha-amidating lyase family. The cofactor is Zn(2+). N-glycosylated. As to expression, widely expressed. In mature larvae, it is ubiquitously expressed with a low expression in all cells and a stronger expression in a subset of neurons. Colocalizes with neuropeptide proctolin. In adults, weak expression is observed in most neuronal cell bodies and in scattered large cells throughout the protocerebrum and also in the subesophageal neuromeres (at protein level).

Its subcellular location is the cell membrane. It carries out the reaction a [peptide]-C-terminal (2S)-2-hydroxyglycine = a [peptide]-C-terminal amide + glyoxylate. Its function is as follows. Peptidyl-alpha-hydroxylglycine alpha-amidating lyase that catalyzes an essential reaction in C-terminal alpha-amidation of peptides. Mediates the dismutation of the unstable peptidyl(2-hydroxyglycine) intermediate to glyoxylate and the corresponding desglycine peptide amide. C-terminal amidation of peptides such as neuropeptides is essential for full biological activity. The protein is Peptidyl-alpha-hydroxyglycine alpha-amidating lyase 1 (Pal1) of Drosophila melanogaster (Fruit fly).